The chain runs to 721 residues: Dolichyl-diphosphooligosaccharide--protein glycosyltransferase subunit STT3B (721 aa).

Over 1–25 (MAAATALDSLPAPLRSLRLKTKQQE) the chain is Cytoplasmic. The helical transmembrane segment at 26-46 (LLLRVSALALIYVLAFVVRLF) threads the bilayer. Over 47-129 (SVLRYESMIH…VHIREVCVLT (83 aa)) the chain is Lumenal. The DXD motif 1 signature appears at 57-59 (EFD). Aspartate 59 provides a ligand contact to Mn(2+). The helical transmembrane segment at 130–148 (APFFAANTTLVAYAFGREI) threads the bilayer. Topologically, residues 149-150 (WD) are cytoplasmic. Residues 151 to 168 (SGAGLVAAALIAVCPGYI) form a helical membrane-spanning segment. The Lumenal portion of the chain corresponds to 169–179 (SRSVAGSYDNE). Aspartate 177 and glutamate 179 together coordinate Mn(2+). Positions 177–179 (DNE) match the DXD motif 2 motif. Residues 180–199 (GVAIFALLLTFYLFVRAVNT) form a helical membrane-spanning segment. Residues 200–201 (GS) lie on the Cytoplasmic side of the membrane. Residues 202 to 216 (LAWSLASAFGYFYMV) traverse the membrane as a helical segment. Over 217–221 (SAWGG) the chain is Lumenal. Residues 222 to 238 (YVFIINLLPLYVLVLLV) traverse the membrane as a helical segment. At 239–243 (TGRYS) the chain is on the cytoplasmic side. A helical membrane pass occupies residues 244–269 (QRLYVAYNSTYVLGMLLAMQIRFVGF). At 270-277 (QHVQSGEH) the chain is on the lumenal side. Residues 278-297 (MAAMGVFFLLQVFFFLDWVK) traverse the membrane as a helical segment. The Cytoplasmic portion of the chain corresponds to 298–313 (YLLNDAKLFKSFLRIT). The helical transmembrane segment at 314 to 334 (LTCVITVGTLALGIGTASGYI) threads the bilayer. Topologically, residues 335-367 (SPWTGRFYSLLDPTYAKDHIPIIASVSEHQPTA) are lumenal. An SVSE motif motif is present at residues 359–362 (SVSE). The helical transmembrane segment at 368-390 (WSSFMFDFHILLFLFPAGLYFCF) threads the bilayer. Over 391 to 396 (KRLSDA) the chain is Cytoplasmic. The chain crosses the membrane as a helical span at residues 397-413 (TIFIVMYGLTSMYFAGV). Residues 414-417 (MVRL) are Lumenal-facing. Arginine 416 is a binding site for dolichyl diphosphooligosaccharide. A helical membrane pass occupies residues 418–439 (ILVAAPAVCLISAIAASATIKN). Residues 440–471 (LTTLIRTKSKSPQTVSGKSSGSKAAAKGAVDQ) are Cytoplasmic-facing. A helical transmembrane segment spans residues 472–492 (SLPFQQNVAIALLLGAFYLLS). Topologically, residues 493–721 (RYAVHCTWVT…YKVKPPKNRS (229 aa)) are lumenal. Positions 548–550 (WWD) are interacts with target acceptor peptide in protein substrate. A WWDYG motif motif is present at residues 548-552 (WWDYG). Residue tyrosine 553 participates in dolichyl diphosphooligosaccharide binding. Asparagine 560 and asparagine 567 each carry an N-linked (GlcNAc...) asparagine glycan. N-linked (GlcNAc...) (high mannose) asparagine glycosylation is present at asparagine 571. Residues 615-622 (DINKFLWM) carry the DK motif motif.

It belongs to the STT3 family. In terms of assembly, component of the oligosaccharyltransferase (OST) complex. It depends on Mg(2+) as a cofactor. Mn(2+) serves as cofactor.

The protein localises to the endoplasmic reticulum membrane. The catalysed reaction is a di-trans,poly-cis-dolichyl diphosphooligosaccharide + L-asparaginyl-[protein] = N(4)-(oligosaccharide-(1-&gt;4)-N-acetyl-beta-D-glucosaminyl-(1-&gt;4)-N-acetyl-beta-D-glucosaminyl)-L-asparaginyl-[protein] + a di-trans,poly-cis-dolichyl diphosphate + H(+). It participates in protein modification; protein glycosylation. In terms of biological role, catalytic subunit of the oligosaccharyl transferase (OST) complex that catalyzes the initial transfer of a defined glycan (Glc(3)Man(9)GlcNAc(2) in eukaryotes) from the lipid carrier dolichol-pyrophosphate to an asparagine residue within an Asn-X-Ser/Thr consensus motif in nascent polypeptide chains, the first step in protein N-glycosylation. N-glycosylation occurs cotranslationally and the complex associates with the Sec61 complex at the channel-forming translocon complex that mediates protein translocation across the endoplasmic reticulum (ER). All subunits are required for a maximal enzyme activity. This subunit contains the active site and the acceptor peptide and donor lipid-linked oligosaccharide (LLO) binding pockets. The polypeptide is Dolichyl-diphosphooligosaccharide--protein glycosyltransferase subunit STT3B (STT3B) (Oryza sativa subsp. japonica (Rice)).